The chain runs to 237 residues: Bax inhibitor 1 (237 aa).

Residues 1–29 (MNIFDRKINFDALLKFSHITPSTQQHLKK) lie on the Cytoplasmic side of the membrane. Lys7 participates in a covalent cross-link: Glycyl lysine isopeptide (Lys-Gly) (interchain with G-Cter in ubiquitin). Residues 30–50 (VYASFALCMFVAAAGAYVHMV) form a helical membrane-spanning segment. The Lumenal segment spans residues 51–52 (TH). A helical membrane pass occupies residues 53–73 (FIQAGLLSALGSLILMIWLMA). Topologically, residues 74–86 (TPHSHETEQKRLG) are cytoplasmic. Residues 87 to 107 (LLAGFAFLTGVGLGPALEFCI) traverse the membrane as a helical segment. The Lumenal portion of the chain corresponds to 108–112 (AVNPS). A helical membrane pass occupies residues 113 to 133 (ILPTAFMGTAMIFTCFTLSAL). Residues 134 to 139 (YARRRS) are Cytoplasmic-facing. A helical membrane pass occupies residues 140–160 (YLFLGGILMSALSLLLLSSLG). Topologically, residues 161–166 (NVFFGS) are lumenal. A helical membrane pass occupies residues 167-187 (IWLFQANLYVGLVVMCGFVLF). Topologically, residues 188–206 (DTQLIIEKAEHGDQDYIWH) are cytoplasmic. Residues 207–227 (CIDLFLDFITVFRKLMMILAM) constitute an intramembrane region (helical). The Cytoplasmic segment spans residues 228–237 (NEKDKKKEKK).

It belongs to the BI1 family. As to quaternary structure, interacts with BCL2 and BCL2L1. Interacts with ERN1. Ubiquitinated by BFAR, leading to proteasomal degradation. Highly abundant in testis.

The protein localises to the endoplasmic reticulum membrane. Functionally, endoplasmic reticulum (ER)-resident protein that confers cellular protection as an anti-apoptotic protein by limiting multiple stress-inducing pathways surrounding the endoplasmic reticulum and mitochondria. Inhibits the activities of the key sensor for the endoplasmic reticulum unfolded protein response IRE1alpha/ERN1 both directly and by blocking BAX/BAK binding. Modulates ER calcium homeostasis by acting as a calcium-leak channel. Negatively regulates autophagy and autophagosome formation, especially during periods of nutrient deprivation, and reduces cell survival during starvation. This Homo sapiens (Human) protein is Bax inhibitor 1 (TMBIM6).